We begin with the raw amino-acid sequence, 479 residues long: Ribosomal RNA small subunit methyltransferase F (479 aa).

Residues 125-131, E149, D176, and D194 contribute to the S-adenosyl-L-methionine site; that span reads AAAPGSK. C247 acts as the Nucleophile in catalysis.

This sequence belongs to the class I-like SAM-binding methyltransferase superfamily. RsmB/NOP family.

The protein resides in the cytoplasm. The enzyme catalyses cytidine(1407) in 16S rRNA + S-adenosyl-L-methionine = 5-methylcytidine(1407) in 16S rRNA + S-adenosyl-L-homocysteine + H(+). Functionally, specifically methylates the cytosine at position 1407 (m5C1407) of 16S rRNA. The polypeptide is Ribosomal RNA small subunit methyltransferase F (Escherichia coli O139:H28 (strain E24377A / ETEC)).